A 208-amino-acid polypeptide reads, in one-letter code: MAVSISSLTSSFASLSFTSNLTPKPQTLPMARTKPFSLSNPAVVKPLVITATSATAPVEVAETADLEKFVKSRLPGGFAAQTVIGTGRRKCAIARVVLQEGTGKFIINYRDAKEYLQGNPLWLQYVKTPLATLGYETNYDVFVKAHGGGLSGQAQAISLGVARALLKVSASHRAPLKQEGLLTRDSRIVERKKPGLKKARKAPQFSKR.

A chloroplast-targeting transit peptide spans 1–51; the sequence is MAVSISSLTSSFASLSFTSNLTPKPQTLPMARTKPFSLSNPAVVKPLVITA. Position 52 is an N-acetylthreonine (threonine 52). The segment at 185-208 is disordered; that stretch reads DSRIVERKKPGLKKARKAPQFSKR. The segment covering 194–208 has biased composition (basic residues); it reads PGLKKARKAPQFSKR.

In terms of assembly, component of the chloroplast small ribosomal subunit (SSU). Mature 70S chloroplast ribosomes of higher plants consist of a small (30S) and a large (50S) subunit. The 30S small subunit contains 1 molecule of ribosomal RNA (16S rRNA) and 24 different proteins. The 50S large subunit contains 3 rRNA molecules (23S, 5S and 4.5S rRNA) and 33 different proteins. uS9c binds directly to 16S ribosomal RNA. uS9c interacts with translation factor pY (PSRP1).

It localises to the plastid. It is found in the chloroplast. In terms of biological role, component of the chloroplast ribosome (chloro-ribosome), a dedicated translation machinery responsible for the synthesis of chloroplast genome-encoded proteins, including proteins of the transcription and translation machinery and components of the photosynthetic apparatus. The sequence is that of Small ribosomal subunit protein uS9c (PRPS9) from Spinacia oleracea (Spinach).